We begin with the raw amino-acid sequence, 452 residues long: tRNA-2-methylthio-N(6)-dimethylallyladenosine synthase (452 aa).

Residues 3–118 (KKVFIKTYGC…LPQLLAERER (116 aa)) form the MTTase N-terminal domain. Residues Cys12, Cys49, Cys81, Cys155, Cys159, and Cys162 each contribute to the [4Fe-4S] cluster site. In terms of domain architecture, Radical SAM core spans 141–379 (RVEGASAFVS…QTVINDSIKR (239 aa)). In terms of domain architecture, TRAM spans 382-445 (ESRLGTVQRI…SFTLRGEVVT (64 aa)).

The protein belongs to the methylthiotransferase family. MiaB subfamily. Monomer. Requires [4Fe-4S] cluster as cofactor.

Its subcellular location is the cytoplasm. It carries out the reaction N(6)-dimethylallyladenosine(37) in tRNA + (sulfur carrier)-SH + AH2 + 2 S-adenosyl-L-methionine = 2-methylsulfanyl-N(6)-dimethylallyladenosine(37) in tRNA + (sulfur carrier)-H + 5'-deoxyadenosine + L-methionine + A + S-adenosyl-L-homocysteine + 2 H(+). Functionally, catalyzes the methylthiolation of N6-(dimethylallyl)adenosine (i(6)A), leading to the formation of 2-methylthio-N6-(dimethylallyl)adenosine (ms(2)i(6)A) at position 37 in tRNAs that read codons beginning with uridine. The polypeptide is tRNA-2-methylthio-N(6)-dimethylallyladenosine synthase (Albidiferax ferrireducens (strain ATCC BAA-621 / DSM 15236 / T118) (Rhodoferax ferrireducens)).